A 77-amino-acid polypeptide reads, in one-letter code: UPF0291 protein OB1671 (77 aa).

Residues 56 to 77 (DPEGKDVTPQKLRDYQDRNKKH) are disordered. Residues 57-77 (PEGKDVTPQKLRDYQDRNKKH) show a composition bias toward basic and acidic residues.

This sequence belongs to the UPF0291 family.

The protein resides in the cytoplasm. This is UPF0291 protein OB1671 from Oceanobacillus iheyensis (strain DSM 14371 / CIP 107618 / JCM 11309 / KCTC 3954 / HTE831).